Consider the following 37-residue polypeptide: Large ribosomal subunit protein bL36 (37 aa).

Belongs to the bacterial ribosomal protein bL36 family.

The chain is Large ribosomal subunit protein bL36 from Borreliella burgdorferi (strain ATCC 35210 / DSM 4680 / CIP 102532 / B31) (Borrelia burgdorferi).